A 361-amino-acid chain; its full sequence is tRNA-specific 2-thiouridylase MnmA (361 aa).

Residues 11 to 18 (GMSGGVDS) and M37 each bind ATP. Residue C106 is the Nucleophile of the active site. A disulfide bridge connects residues C106 and C202. G130 provides a ligand contact to ATP. An interaction with tRNA region spans residues 152–154 (KDQ). The active-site Cysteine persulfide intermediate is the C202. The segment at 308 to 309 (RY) is interaction with tRNA.

This sequence belongs to the MnmA/TRMU family.

It localises to the cytoplasm. It catalyses the reaction S-sulfanyl-L-cysteinyl-[protein] + uridine(34) in tRNA + AH2 + ATP = 2-thiouridine(34) in tRNA + L-cysteinyl-[protein] + A + AMP + diphosphate + H(+). In terms of biological role, catalyzes the 2-thiolation of uridine at the wobble position (U34) of tRNA, leading to the formation of s(2)U34. The sequence is that of tRNA-specific 2-thiouridylase MnmA from Clostridium botulinum (strain Eklund 17B / Type B).